The chain runs to 208 residues: Methyl-CpG-binding domain protein 3-like 5 (208 aa).

It belongs to the MBD3L family.

In Homo sapiens (Human), this protein is Methyl-CpG-binding domain protein 3-like 5 (MBD3L5).